A 2542-amino-acid chain; its full sequence is Ankyrin repeat and KH domain-containing protein 1 (2542 aa).

Position 1 is an N-acetylmethionine (methionine 1). The segment covering 1–10 (MLTDSGGGGT) has biased composition (gly residues). Disordered regions lie at residues 1 to 44 (MLTD…IRTV) and 50 to 69 (AGPA…SGTG). A compositionally biased stretch (low complexity) spans 20–29 (APRSAPAGAS). The segment covering 57–69 (GSSGGGGSGSGTG) has biased composition (gly residues). Phosphoserine occurs at positions 101 and 105. ANK repeat units follow at residues 204–233 (VDTR…SVNE), 237–266 (EGES…NVED), 271–300 (GDIT…DVNS), 304–333 (TGNT…NIED), 337–366 (NGHT…GINT), 371–400 (FKES…DQEH), 404–433 (EMHT…QVNM), 437–466 (SFES…NLEE), 470–499 (EGYT…NINA), 504–533 (TQET…DIEL), 534–563 (GCST…NVHA), 567–596 (TGDT…DLEH), 600–629 (GGRT…NVNR), 634–663 (NDHT…DPTH), and 667–696 (DGST…NVLS). A coiled-coil region spans residues 775 to 852 (LECIVEETEG…RQLQMKTQQQ (78 aa)). Serine 803 is subject to Phosphoserine. ANK repeat units lie at residues 1054–1083 (NHDT…KIEH), 1087–1116 (KGFT…DIEA), 1121–1150 (TKDT…NKEH), 1154–1183 (SDYT…EINS), 1189–1218 (LGIS…DINA), 1223–1252 (NRNT…NVEH), 1256–1285 (TGLT…DVNA), 1291–1320 (SRDT…HIDV), 1324–1353 (KGNT…DVDA), and 1357–1386 (RKIT…QFPS). The stretch at 1415-1485 (KAKDQQAAEA…ENKPKENSEL (71 aa)) forms a coiled coil. Disordered stretches follow at residues 1441–1517 (REES…TIGI), 1534–1614 (NVVT…SQEL), and 1632–1664 (SQEE…YKTV). The segment covering 1453 to 1463 (REKRKEKRKKK) has biased composition (basic residues). Residues 1464 to 1483 (KEEQKRKQEEDEENKPKENS) are compositionally biased toward basic and acidic residues. The segment covering 1484–1502 (ELPEDEDEEENDEDVEQEV) has biased composition (acidic residues). Positions 1503–1517 (PIEPPSATTTTTIGI) are enriched in low complexity. Serine 1540 bears the Phosphoserine mark. A Phosphothreonine modification is found at threonine 1553. Over residues 1590–1603 (NSDSDNLDSTDCNS) the composition is skewed to low complexity. Positions 1604 to 1614 (ESSSGGKSQEL) are enriched in polar residues. A Phosphoserine modification is found at serine 1632. A compositionally biased stretch (polar residues) spans 1638 to 1664 (STATSKTQTRLEGEVTPNSLSTSYKTV). A Phosphothreonine modification is found at threonine 1653. In terms of domain architecture, KH spans 1695 to 1759 (RRSKKLSVPA…ESTRYAVQLI (65 aa)). Disordered regions lie at residues 1886–1923 (NTWG…VLPS), 1987–2106 (PSVS…APLT), and 2260–2367 (NMHP…IPPP). A compositionally biased stretch (polar residues) spans 1898 to 1922 (PGNTNSSPKHNNTSRLPNQNGTVLP). A compositionally biased stretch (low complexity) spans 1987-1996 (PSVSSAPITS). Positions 1997–2019 (GQAPTTFLPASTSQAQLSSQKME) are enriched in polar residues. Residues 2042 to 2077 (CTPSSTANSCSSSASNTPGAPETHPSSSPTPTSSNT) are compositionally biased toward low complexity. Over residues 2078 to 2106 (QEEAQPSSVSDLSPMSMPFASNSEPAPLT) the composition is skewed to polar residues. 2 stretches are compositionally biased toward low complexity: residues 2285-2308 (LPSI…FSGI) and 2337-2349 (TSAS…APPT).

This sequence belongs to the mask family. As to quaternary structure, interacts with PTPN11. Isoform 2 interacts with HIV-1 VPR. Interacts with NOD2. As to expression, ubiquitous with high expression in cervix, spleen and brain. Expressed in hematopoietic cells with increased expression in leukemia cells. Isoform 2 is highly expressed in spleen with almost no expression in muscle and brain.

The protein localises to the cytoplasm. Functionally, may play a role as a scaffolding protein that may be associated with the abnormal phenotype of leukemia cells. Isoform 2 may possess an antiapoptotic effect and protect cells during normal cell survival through its regulation of caspases. This chain is Ankyrin repeat and KH domain-containing protein 1 (ANKHD1), found in Homo sapiens (Human).